The following is a 128-amino-acid chain: Large ribosomal subunit protein bL17 (128 aa).

This sequence belongs to the bacterial ribosomal protein bL17 family. Part of the 50S ribosomal subunit. Contacts protein L32.

The chain is Large ribosomal subunit protein bL17 from Pseudomonas entomophila (strain L48).